The primary structure comprises 851 residues: Thrombospondin type-1 domain-containing protein 1 (851 aa).

The N-terminal stretch at 1–24 (MKPMLKDFSNLLLVVLCDYVLGEA) is a signal peptide. Topologically, residues 25-412 (EYLLLQEPVH…SPQDPVKSNN (388 aa)) are extracellular. Residues asparagine 53, asparagine 58, asparagine 69, asparagine 110, asparagine 135, and asparagine 304 are each glycosylated (N-linked (GlcNAc...) asparagine). In terms of domain architecture, TSP type-1 spans 339 to 392 (IETWGPWQPWSPCSTTCGDAVRERRRLCVTSFPSRPSCSGMSSETSPCSLEECA). 3 disulfide bridges follow: cysteine 351–cysteine 386, cysteine 355–cysteine 391, and cysteine 366–cysteine 376. The helical transmembrane segment at 413–433 (VVTVTGISLCLFIIFATVLIT) threads the bilayer. Over 434-851 (LWRRFGRAPK…STLSVEKLVI (418 aa)) the chain is Cytoplasmic. Serine 462 is subject to Phosphoserine. Disordered stretches follow at residues 471 to 516 (SEPR…ESFQ), 626 to 646 (KSQI…HSRS), and 682 to 777 (SRMR…SSPI). The segment covering 685 to 695 (RTWDQMEDRCR) has biased composition (basic and acidic residues). Polar residues predominate over residues 765-776 (SHRSASRKQSSP).

In terms of assembly, part of a complex composed of THSD1, PTK2/FAK1, TLN1 and VCL. Interacts with TLN1. Expressed in cerebral vascular endothelium.

Its subcellular location is the endosome membrane. The protein localises to the cell junction. The protein resides in the focal adhesion. Is a positive regulator of nascent focal adhesion assembly, involved in the modulation of endothelial cell attachment to the extracellular matrix. This Mus musculus (Mouse) protein is Thrombospondin type-1 domain-containing protein 1 (Thsd1).